We begin with the raw amino-acid sequence, 133 residues long: Small ribosomal subunit protein uS8 (133 aa).

The protein belongs to the universal ribosomal protein uS8 family. As to quaternary structure, part of the 30S ribosomal subunit. Contacts proteins S5 and S12.

One of the primary rRNA binding proteins, it binds directly to 16S rRNA central domain where it helps coordinate assembly of the platform of the 30S subunit. The sequence is that of Small ribosomal subunit protein uS8 from Micrococcus luteus (Micrococcus lysodeikticus).